Here is a 316-residue protein sequence, read N- to C-terminus: 4-hydroxy-3-methylbut-2-enyl diphosphate reductase (316 aa).

C12 provides a ligand contact to [4Fe-4S] cluster. Residues H41 and H74 each coordinate (2E)-4-hydroxy-3-methylbut-2-enyl diphosphate. Residues H41 and H74 each coordinate dimethylallyl diphosphate. H41 and H74 together coordinate isopentenyl diphosphate. Residue C96 participates in [4Fe-4S] cluster binding. H124 serves as a coordination point for (2E)-4-hydroxy-3-methylbut-2-enyl diphosphate. Residue H124 participates in dimethylallyl diphosphate binding. An isopentenyl diphosphate-binding site is contributed by H124. E126 functions as the Proton donor in the catalytic mechanism. A (2E)-4-hydroxy-3-methylbut-2-enyl diphosphate-binding site is contributed by T167. C197 is a binding site for [4Fe-4S] cluster. Positions 225, 226, 227, and 269 each coordinate (2E)-4-hydroxy-3-methylbut-2-enyl diphosphate. S225, S226, N227, and S269 together coordinate dimethylallyl diphosphate. Positions 225, 226, 227, and 269 each coordinate isopentenyl diphosphate.

Belongs to the IspH family. As to quaternary structure, homodimer. [4Fe-4S] cluster serves as cofactor.

It carries out the reaction isopentenyl diphosphate + 2 oxidized [2Fe-2S]-[ferredoxin] + H2O = (2E)-4-hydroxy-3-methylbut-2-enyl diphosphate + 2 reduced [2Fe-2S]-[ferredoxin] + 2 H(+). The enzyme catalyses dimethylallyl diphosphate + 2 oxidized [2Fe-2S]-[ferredoxin] + H2O = (2E)-4-hydroxy-3-methylbut-2-enyl diphosphate + 2 reduced [2Fe-2S]-[ferredoxin] + 2 H(+). It functions in the pathway isoprenoid biosynthesis; dimethylallyl diphosphate biosynthesis; dimethylallyl diphosphate from (2E)-4-hydroxy-3-methylbutenyl diphosphate: step 1/1. The protein operates within isoprenoid biosynthesis; isopentenyl diphosphate biosynthesis via DXP pathway; isopentenyl diphosphate from 1-deoxy-D-xylulose 5-phosphate: step 6/6. Catalyzes the conversion of 1-hydroxy-2-methyl-2-(E)-butenyl 4-diphosphate (HMBPP) into a mixture of isopentenyl diphosphate (IPP) and dimethylallyl diphosphate (DMAPP). Acts in the terminal step of the DOXP/MEP pathway for isoprenoid precursor biosynthesis. The sequence is that of 4-hydroxy-3-methylbut-2-enyl diphosphate reductase from Enterobacter sp. (strain 638).